A 379-amino-acid chain; its full sequence is MYNINQSTDTKEAAAIEARRNREKERQNRFFNVRNRVMGVDVQALNNQVGDRKLREAAERSKEAAYGTSQVQYDVVVQMLEKEEADRTRRLAKKVQEFREQKQQLKNGREFSLWDPDQVWKGLPTYLSYSNTYPGPASLQYFSGEDLDRATRLRMQQGQFRYNLERQQQEQQQAKVDENCADALSNQLRLAMDAQATHLARLEESCRAAMMCAMANANKAQAAVQAGRQRCERQREQKANLAEIRHQSTSDLLTENPQVAQHRTAPHRVLPYCWKGMTPEQRAAIRKEQEVQRSKKEAHRQAEKTLDTEWKSQTMSSAQALLELEEQERELCAVFQRGLGSFNQQLANEQKAQQDYLNSVIYTNQPTAQYHRQFNTSSR.

The interval 1–21 (MYNINQSTDTKEAAAIEARRN) is disordered. The segment covering 9–21 (DTKEAAAIEARRN) has biased composition (basic and acidic residues). Coiled coils occupy residues 85 to 111 (ADRT…GREF), 161 to 241 (RYNL…KANL), and 280 to 304 (EQRA…QAEK).

It belongs to the RIB43A family. Microtubule inner protein component of sperm flagellar doublet microtubules.

It localises to the cytoplasm. The protein resides in the cytoskeleton. It is found in the flagellum axoneme. The sequence is that of RIB43A-like with coiled-coils protein 1 (RIBC1) from Macaca fascicularis (Crab-eating macaque).